The sequence spans 321 residues: Cytochrome c biogenesis protein CcsA (321 aa).

7 helical membrane passes run 9–29 (ILTH…LITL), 44–64 (GMIA…VSSG), 68–88 (LSNL…LHTI), 143–163 (MLLS…LLII), 225–245 (VISL…VWAN), 259–273 (TWAF…IYLH), and 288–308 (VASI…LLGI).

Belongs to the CcmF/CycK/Ccl1/NrfE/CcsA family. May interact with Ccs1.

Its subcellular location is the plastid. The protein localises to the chloroplast thylakoid membrane. Its function is as follows. Required during biogenesis of c-type cytochromes (cytochrome c6 and cytochrome f) at the step of heme attachment. The polypeptide is Cytochrome c biogenesis protein CcsA (Saccharum hybrid (Sugarcane)).